A 319-amino-acid chain; its full sequence is Ninja-family protein AFP4 (319 aa).

Basic and acidic residues predominate over residues 39-54; it reads DSEHGENQQEAKKRED. Disordered stretches follow at residues 39-63, 99-120, and 205-228; these read DSEHGENQQEAKKREDEAEEDEKDV, FVFDEQRSGGGNGGDMRRIVGR, and VTGPVNGKGKNGNTAKKQKNNVEN.

It belongs to the Ninja family. As to quaternary structure, interacts with ABI5/DPBF1, AREB3/DPBF3, EEL/DPBF4, ABF1 and ABF3/DPBF5. In terms of tissue distribution, predominantly expressed in roots and seedlings.

The protein localises to the nucleus. In terms of biological role, acts as a negative regulator of abscisic acid (ABA) and salinity responses. In Arabidopsis thaliana (Mouse-ear cress), this protein is Ninja-family protein AFP4 (AFP4).